Here is a 534-residue protein sequence, read N- to C-terminus: MKTKFIFVTGGVVSSIGKGLAAASLGALLEARGLRVTHQKLDPYINVDPGTMSPFQHGEVFVTDDGAETDLDLGHYERYTSARLSKKSNFTTGQVYFSVIEKERRGDYLGGTVQVIPHITDEIKSKILDNAKGSDIAIIEIGGTVGDIESLPFLEAIRQFKADRGAGNVLYLHVTLVPFIKTADELKTKPTQHSVKELREIGIQPDILLCRCEQDLPREMKAKIALFCNVEEKAVITSMDAEHIYAVPLALHKEGLDEQVVEKLNIWAKAPDLTPWQQVVDKLMHPGHGKVRIAIVGKYVNLTESYKSLAEALTHGGIANDCRVHLSYLDSEKIEQEGIDGLLDGVDGILVPGGFGERGTEGKIKAIEYARTRKIPFFGICLGMQMAVVEYARNVCHLDDAFSSEFKQDCANPIIHLMEEQKGVSRKGGTMRLGAYPCTLAKGSFAQKAYGTLDISERHRHRYEFNNDYRDLLVSNGLILSGIYKEGDLVEIVEIPDHPWFVGCQFHPEFKSKPLNPHPLFRAFIAAALHNIKA.

An amidoligase domain region spans residues 1-266; the sequence is MKTKFIFVTG…DEQVVEKLNI (266 aa). CTP is bound at residue S14. S14 contributes to the UTP binding site. Residues 15–20 and D72 each bind ATP; that span reads SIGKGL. Mg(2+) contacts are provided by D72 and E140. Residues 147-149, 187-192, and K223 each bind CTP; these read DIE and KTKPTQ. Residues 187–192 and K223 each bind UTP; that span reads KTKPTQ. One can recognise a Glutamine amidotransferase type-1 domain in the interval 292–534; it reads RIAIVGKYVN…IAAALHNIKA (243 aa). Residue G354 coordinates L-glutamine. The Nucleophile; for glutamine hydrolysis role is filled by C381. L-glutamine-binding positions include 382–385, E405, and R462; that span reads LGMQ. Catalysis depends on residues H507 and E509.

Belongs to the CTP synthase family. In terms of assembly, homotetramer.

It catalyses the reaction UTP + L-glutamine + ATP + H2O = CTP + L-glutamate + ADP + phosphate + 2 H(+). It carries out the reaction L-glutamine + H2O = L-glutamate + NH4(+). The enzyme catalyses UTP + NH4(+) + ATP = CTP + ADP + phosphate + 2 H(+). It functions in the pathway pyrimidine metabolism; CTP biosynthesis via de novo pathway; CTP from UDP: step 2/2. Allosterically activated by GTP, when glutamine is the substrate; GTP has no effect on the reaction when ammonia is the substrate. The allosteric effector GTP functions by stabilizing the protein conformation that binds the tetrahedral intermediate(s) formed during glutamine hydrolysis. Inhibited by the product CTP, via allosteric rather than competitive inhibition. Its function is as follows. Catalyzes the ATP-dependent amination of UTP to CTP with either L-glutamine or ammonia as the source of nitrogen. Regulates intracellular CTP levels through interactions with the four ribonucleotide triphosphates. The chain is CTP synthase from Geotalea uraniireducens (strain Rf4) (Geobacter uraniireducens).